Reading from the N-terminus, the 344-residue chain is uncharacterized protein (344 aa).

Residues 221–249 (IQAQSMDEQKQIQEIYQNVEKLKEDVTKN) are a coiled coil.

It belongs to the IIV-6 287R family.

This is an uncharacterized protein from Aedes vexans (Inland floodwater mosquito).